The chain runs to 191 residues: UPF0312 protein Sputw3181_1309 (191 aa).

The N-terminal stretch at 1 to 22 is a signal peptide; that stretch reads MKKQLLSALIGVSLLVPMAASA.

It belongs to the UPF0312 family. Type 1 subfamily.

Its subcellular location is the periplasm. The polypeptide is UPF0312 protein Sputw3181_1309 (Shewanella sp. (strain W3-18-1)).